We begin with the raw amino-acid sequence, 146 residues long: Large ribosomal subunit protein uL15 (146 aa).

A disordered region spans residues Met1–Pro65. Residues Arg24–Ala34 are compositionally biased toward gly residues.

The protein belongs to the universal ribosomal protein uL15 family. Part of the 50S ribosomal subunit.

In terms of biological role, binds to the 23S rRNA. In Bordetella petrii (strain ATCC BAA-461 / DSM 12804 / CCUG 43448), this protein is Large ribosomal subunit protein uL15.